We begin with the raw amino-acid sequence, 295 residues long: Probable CBASS effector molecule IK1_05631 (295 aa).

4 consecutive transmembrane segments (helical) span residues 26–46, 56–76, 167–187, and 190–210; these read IFYAVRISISILIPILSISIY, SNTGVWFSVIGSIWLLIAYQI, ILLFTVSVLYLFLTIAFGFFV, and SMQEYIIKILLPSMSILIYGF.

It localises to the cell membrane. Its function is as follows. Effector protein of a CBASS antiviral system. CBASS (cyclic oligonucleotide-based antiphage signaling system) provides immunity against bacteriophage. The CD-NTase protein synthesizes cyclic nucleotides in response to infection; these serve as specific second messenger signals. The signals activate a diverse range of effectors, leading to bacterial cell death and thus abortive phage infection. A type I-B CBASS system. In terms of biological role, protects B.subtilis against phage infection. When IK1_05630 and IK1_05631 are introduced in B.subtilis BEST7003 there is 1000-fold protection against phage SBSphiC. Both genes are required for protection. Activation leads to bacterial cell lysis and death, which occurs before the phage has finished its replication cycle, thus protecting non-infected bacteria by aborting the phage infection and preventing its propagation. This is Probable CBASS effector molecule IK1_05631 from Bacillus cereus (strain VD146).